Consider the following 114-residue polypeptide: Hydrogenase maturation factor HypA (114 aa).

H2 is a binding site for Ni(2+). C70, C73, C86, and C89 together coordinate Zn(2+).

Belongs to the HypA/HybF family.

In terms of biological role, involved in the maturation of [NiFe] hydrogenases. Required for nickel insertion into the metal center of the hydrogenase. In Trichodesmium erythraeum (strain IMS101), this protein is Hydrogenase maturation factor HypA.